We begin with the raw amino-acid sequence, 175 residues long: Nucleoside triphosphate/diphosphate phosphatase (175 aa).

Arg-23 functions as the Proton donor in the catalytic mechanism. Mg(2+) is bound by residues Asn-87, Asp-103, Asp-105, Asp-107, Asp-120, and Glu-123.

The protein belongs to the Ntdp family. Requires Mg(2+) as cofactor.

The catalysed reaction is a ribonucleoside 5'-triphosphate + H2O = a ribonucleoside 5'-diphosphate + phosphate + H(+). It catalyses the reaction a ribonucleoside 5'-diphosphate + H2O = a ribonucleoside 5'-phosphate + phosphate + H(+). Functionally, has nucleoside phosphatase activity towards nucleoside triphosphates and nucleoside diphosphates. This is Nucleoside triphosphate/diphosphate phosphatase from Halalkalibacterium halodurans (strain ATCC BAA-125 / DSM 18197 / FERM 7344 / JCM 9153 / C-125) (Bacillus halodurans).